The primary structure comprises 268 residues: Ribosomal RNA small subunit methyltransferase A (268 aa).

N18, L20, G45, E66, D91, and N112 together coordinate S-adenosyl-L-methionine.

It belongs to the class I-like SAM-binding methyltransferase superfamily. rRNA adenine N(6)-methyltransferase family. RsmA subfamily.

It localises to the cytoplasm. It catalyses the reaction adenosine(1518)/adenosine(1519) in 16S rRNA + 4 S-adenosyl-L-methionine = N(6)-dimethyladenosine(1518)/N(6)-dimethyladenosine(1519) in 16S rRNA + 4 S-adenosyl-L-homocysteine + 4 H(+). Functionally, specifically dimethylates two adjacent adenosines (A1518 and A1519) in the loop of a conserved hairpin near the 3'-end of 16S rRNA in the 30S particle. May play a critical role in biogenesis of 30S subunits. This Shewanella frigidimarina (strain NCIMB 400) protein is Ribosomal RNA small subunit methyltransferase A.